The sequence spans 378 residues: 4-hydroxy-3-methylbut-2-en-1-yl diphosphate synthase (flavodoxin) (378 aa).

Positions 268, 271, 303, and 310 each coordinate [4Fe-4S] cluster.

It belongs to the IspG family. Requires [4Fe-4S] cluster as cofactor.

It carries out the reaction (2E)-4-hydroxy-3-methylbut-2-enyl diphosphate + oxidized [flavodoxin] + H2O + 2 H(+) = 2-C-methyl-D-erythritol 2,4-cyclic diphosphate + reduced [flavodoxin]. The protein operates within isoprenoid biosynthesis; isopentenyl diphosphate biosynthesis via DXP pathway; isopentenyl diphosphate from 1-deoxy-D-xylulose 5-phosphate: step 5/6. Converts 2C-methyl-D-erythritol 2,4-cyclodiphosphate (ME-2,4cPP) into 1-hydroxy-2-methyl-2-(E)-butenyl 4-diphosphate. This chain is 4-hydroxy-3-methylbut-2-en-1-yl diphosphate synthase (flavodoxin), found in Corynebacterium glutamicum (strain ATCC 13032 / DSM 20300 / JCM 1318 / BCRC 11384 / CCUG 27702 / LMG 3730 / NBRC 12168 / NCIMB 10025 / NRRL B-2784 / 534).